Here is a 393-residue protein sequence, read N- to C-terminus: Riboflavin biosynthesis protein RibBA (393 aa).

Residues 1 to 200 (MEFDEIKDAL…IESLVNYQKD (200 aa)) are DHBP synthase. D-ribulose 5-phosphate contacts are provided by residues 27–28 (RE), Asp32, 139–143 (RTGHT), and Glu163. Glu28 contacts Mg(2+). His142 lines the Mg(2+) pocket. The segment at 201-393 (KDTSVELKAK…TKKIKMGHLI (193 aa)) is GTP cyclohydrolase II. 249–253 (RIHSA) contacts GTP. Zn(2+) is bound by residues Cys254, Cys265, and Cys267. GTP-binding positions include Gln270, 291-293 (EGR), and Thr313. Asp325 (proton acceptor; for GTP cyclohydrolase activity) is an active-site residue. The active-site Nucleophile; for GTP cyclohydrolase activity is the Arg327. Residues Ser348 and Lys353 each contribute to the GTP site.

It in the N-terminal section; belongs to the DHBP synthase family. This sequence in the C-terminal section; belongs to the GTP cyclohydrolase II family. Mg(2+) is required as a cofactor. It depends on Mn(2+) as a cofactor. Requires Zn(2+) as cofactor.

It carries out the reaction D-ribulose 5-phosphate = (2S)-2-hydroxy-3-oxobutyl phosphate + formate + H(+). The catalysed reaction is GTP + 4 H2O = 2,5-diamino-6-hydroxy-4-(5-phosphoribosylamino)-pyrimidine + formate + 2 phosphate + 3 H(+). It participates in cofactor biosynthesis; riboflavin biosynthesis; 2-hydroxy-3-oxobutyl phosphate from D-ribulose 5-phosphate: step 1/1. The protein operates within cofactor biosynthesis; riboflavin biosynthesis; 5-amino-6-(D-ribitylamino)uracil from GTP: step 1/4. In terms of biological role, catalyzes the conversion of D-ribulose 5-phosphate to formate and 3,4-dihydroxy-2-butanone 4-phosphate. Catalyzes the conversion of GTP to 2,5-diamino-6-ribosylamino-4(3H)-pyrimidinone 5'-phosphate (DARP), formate and pyrophosphate. The chain is Riboflavin biosynthesis protein RibBA from Staphylococcus haemolyticus (strain JCSC1435).